The following is a 101-amino-acid chain: MIPGELMAADGEIELNAGRHTASVTVANTGDRPIQVGSHFHFYETNAALSFDREATRGFRLNIAAGTAVRFEPGQTRTVELVALDGDRIVYGFNGKIMGAL.

It belongs to the urease beta subunit family. In terms of assembly, heterotrimer of UreA (gamma), UreB (beta) and UreC (alpha) subunits. Three heterotrimers associate to form the active enzyme.

It localises to the cytoplasm. It catalyses the reaction urea + 2 H2O + H(+) = hydrogencarbonate + 2 NH4(+). Its pathway is nitrogen metabolism; urea degradation; CO(2) and NH(3) from urea (urease route): step 1/1. The protein is Urease subunit beta of Cupriavidus pinatubonensis (strain JMP 134 / LMG 1197) (Cupriavidus necator (strain JMP 134)).